The primary structure comprises 101 residues: NAD(P)H-quinone oxidoreductase subunit 4L, chloroplastic (101 aa).

The next 3 helical transmembrane spans lie at 2 to 22 (MLEHVLVLSAYLFSIGIYGLI), 32 to 52 (MCLELILNAVNMNLVTFSDLF), and 61 to 81 (IFSIFVIAIAAAEAAIGPAIV).

The protein belongs to the complex I subunit 4L family. As to quaternary structure, NDH is composed of at least 16 different subunits, 5 of which are encoded in the nucleus.

It is found in the plastid. The protein localises to the chloroplast thylakoid membrane. The enzyme catalyses a plastoquinone + NADH + (n+1) H(+)(in) = a plastoquinol + NAD(+) + n H(+)(out). It catalyses the reaction a plastoquinone + NADPH + (n+1) H(+)(in) = a plastoquinol + NADP(+) + n H(+)(out). In terms of biological role, NDH shuttles electrons from NAD(P)H:plastoquinone, via FMN and iron-sulfur (Fe-S) centers, to quinones in the photosynthetic chain and possibly in a chloroplast respiratory chain. The immediate electron acceptor for the enzyme in this species is believed to be plastoquinone. Couples the redox reaction to proton translocation, and thus conserves the redox energy in a proton gradient. This Nymphaea alba (White water-lily) protein is NAD(P)H-quinone oxidoreductase subunit 4L, chloroplastic.